A 352-amino-acid chain; its full sequence is (2E,6E)-farnesyl diphosphate synthase (352 aa).

Residues lysine 43, arginine 46, and histidine 77 each contribute to the isopentenyl diphosphate site. Residues aspartate 84 and aspartate 88 each coordinate Mg(2+). A DDXXD motif motif is present at residues aspartate 84 to aspartate 88. Position 94 (arginine 94) interacts with isopentenyl diphosphate. Residues aspartate 236 to glycine 240 carry the DDXXD motif motif.

Belongs to the FPP/GGPP synthase family. It depends on Mg(2+) as a cofactor.

The enzyme catalyses isopentenyl diphosphate + dimethylallyl diphosphate = (2E)-geranyl diphosphate + diphosphate. The catalysed reaction is isopentenyl diphosphate + (2E)-geranyl diphosphate = (2E,6E)-farnesyl diphosphate + diphosphate. Its pathway is isoprenoid biosynthesis; geranyl diphosphate biosynthesis; geranyl diphosphate from dimethylallyl diphosphate and isopentenyl diphosphate: step 1/1. It functions in the pathway isoprenoid biosynthesis; farnesyl diphosphate biosynthesis; farnesyl diphosphate from geranyl diphosphate and isopentenyl diphosphate. Functionally, catalyzes the sequential condensations of isopentenyl pyrophosphate (IPP) with dimethylallyl diphosphate (DMAPP) to yield geranyl diphosphate (GPP) and with GPP to yield (2E,6E)-farnesyl diphosphate (E,E-FPP). The polypeptide is (2E,6E)-farnesyl diphosphate synthase (Mycobacterium tuberculosis (strain ATCC 25618 / H37Rv)).